Consider the following 281-residue polypeptide: Probable endonuclease 4 (281 aa).

9 residues coordinate Zn(2+): histidine 69, histidine 109, glutamate 145, aspartate 179, histidine 182, histidine 216, aspartate 229, histidine 231, and glutamate 261.

This sequence belongs to the AP endonuclease 2 family. It depends on Zn(2+) as a cofactor.

It catalyses the reaction Endonucleolytic cleavage to 5'-phosphooligonucleotide end-products.. Endonuclease IV plays a role in DNA repair. It cleaves phosphodiester bonds at apurinic or apyrimidinic (AP) sites, generating a 3'-hydroxyl group and a 5'-terminal sugar phosphate. The sequence is that of Probable endonuclease 4 from Chlorobaculum tepidum (strain ATCC 49652 / DSM 12025 / NBRC 103806 / TLS) (Chlorobium tepidum).